A 479-amino-acid polypeptide reads, in one-letter code: Proline--tRNA ligase (479 aa).

The protein belongs to the class-II aminoacyl-tRNA synthetase family. ProS type 3 subfamily. In terms of assembly, homodimer.

Its subcellular location is the cytoplasm. It carries out the reaction tRNA(Pro) + L-proline + ATP = L-prolyl-tRNA(Pro) + AMP + diphosphate. In terms of biological role, catalyzes the attachment of proline to tRNA(Pro) in a two-step reaction: proline is first activated by ATP to form Pro-AMP and then transferred to the acceptor end of tRNA(Pro). The sequence is that of Proline--tRNA ligase from Mesomycoplasma hyopneumoniae (strain J / ATCC 25934 / NCTC 10110) (Mycoplasma hyopneumoniae).